A 475-amino-acid polypeptide reads, in one-letter code: E3 ubiquitin-protein ligase TRIM62 (475 aa).

The segment at 11–54 adopts an RING-type zinc-finger fold; sequence CSICLSIYQDPVSLGCEHYFCRRCITEHWVRQEAQGARDCPECR. Residues 88-128 form a B box-type zinc finger; that stretch reads RAARPCQAHDKVKLFCLTDRALLCFFCDEPALHEQHQVTGI. Zn(2+) contacts are provided by cysteine 93, histidine 96, cysteine 114, and histidine 120. Residues 121–241 are a coiled coil; that stretch reads EQHQVTGIDD…LQERLAETDR (121 aa). Residues 277–475 form the B30.2/SPRY domain; the sequence is PLQYTIWKSL…QPLRINTVRI (199 aa).

This sequence belongs to the TRIM/RBCC family. In terms of assembly, interacts with the ubiquitin-conjugating enzyme, UBE2D2. Polyubiquitinated, autoubiquitinated in the presence of UBE2D2.

The protein localises to the cytoplasm. The catalysed reaction is S-ubiquitinyl-[E2 ubiquitin-conjugating enzyme]-L-cysteine + [acceptor protein]-L-lysine = [E2 ubiquitin-conjugating enzyme]-L-cysteine + N(6)-ubiquitinyl-[acceptor protein]-L-lysine.. It participates in protein modification; protein ubiquitination. E3 ubiquitin ligase that plays a role in antifungal immunity by mediating 'Lys-27'-linked ubiquitination of CARD9 downstream of C-type lectin receptors; leading to CARD9 activation, followed by activation of NF-kappa-B and MAP kinase p38 pathways. E3 ubiquitin ligase activity is dependent on E2 ubiquitin-conjugating enzyme UBE2D2. The sequence is that of E3 ubiquitin-protein ligase TRIM62 from Mus musculus (Mouse).